Reading from the N-terminus, the 387-residue chain is Phosphoglycerate kinase (387 aa).

Substrate contacts are provided by residues D21–N23, R36, H59–R62, R113, and R146. ATP contacts are provided by residues K197, E314, and G340–T343.

Belongs to the phosphoglycerate kinase family. As to quaternary structure, monomer.

Its subcellular location is the cytoplasm. It carries out the reaction (2R)-3-phosphoglycerate + ATP = (2R)-3-phospho-glyceroyl phosphate + ADP. It participates in carbohydrate degradation; glycolysis; pyruvate from D-glyceraldehyde 3-phosphate: step 2/5. This is Phosphoglycerate kinase from Yersinia enterocolitica serotype O:8 / biotype 1B (strain NCTC 13174 / 8081).